The chain runs to 580 residues: M-phase inducer phosphatase 2 (580 aa).

The disordered stretch occupies residues 1–24; the sequence is MEVPQPEPAPGSALSPAGVCGGAQ. Ser-42 is subject to Phosphoserine. Low complexity predominate over residues 89–107; sequence SLSRRASESSLSSESSESS. 2 disordered regions span residues 89–117 and 165–196; these read SLSR…DSPS and NITN…ENDG. Position 169 is a phosphoserine; by MELK (Ser-169). Ser-249 carries the phosphoserine modification. Ser-323 carries the post-translational modification Phosphoserine; by MELK and MAPK14. The disordered stretch occupies residues 331–370; sequence PILKRLERPQDRDTPVQNKRRRSVTPPEEQQEAEEPKARV. Residues 334–344 show a composition bias toward basic and acidic residues; it reads KRLERPQDRDT. Ser-353 carries the phosphoserine; by AURKA modification. Phosphoserine; by BRSK1 and MAPK14 is present on Ser-375. Residues 431 to 538 enclose the Rhodanese domain; the sequence is IVDKFVIVDC…FFPQHPNFCE (108 aa). Position 470 is a phosphoserine (Ser-470). Cys-487 is an active-site residue. Position 563 is a phosphoserine (Ser-563).

Belongs to the MPI phosphatase family. Interacts with MAPK14 and 14-3-3 proteins. Post-translationally, phosphorylated by BRSK1 in vitro. Phosphorylated by CHEK1, which inhibits the activity of this protein. Phosphorylation at Ser-353 by AURKA might locally participate in the control of the onset of mitosis. Phosphorylation by MELK at Ser-169 promotes localization to the centrosome and the spindle poles during mitosis. Phosphorylation at Ser-323 and Ser-375 by MAPK14 is required for binding to 14-3-3 proteins.

The protein localises to the cytoplasm. Its subcellular location is the cytoskeleton. The protein resides in the microtubule organizing center. It localises to the centrosome. It is found in the spindle pole. The enzyme catalyses O-phospho-L-tyrosyl-[protein] + H2O = L-tyrosyl-[protein] + phosphate. Stimulated by B-type cyclins. Functionally, tyrosine protein phosphatase which functions as a dosage-dependent inducer of mitotic progression. Directly dephosphorylates CDK1 and stimulates its kinase activity. Required for G2/M phases of the cell cycle progression and abscission during cytokinesis in a ECT2-dependent manner. The three isoforms seem to have a different level of activity. In Homo sapiens (Human), this protein is M-phase inducer phosphatase 2 (CDC25B).